Here is a 912-residue protein sequence, read N- to C-terminus: Protein translocase subunit SecA (912 aa).

ATP contacts are provided by residues Gln-87, 105 to 109 (GEGKT), and Asp-508. The interval 865–912 (DEEAAQVQSGNAPVPVSQVTRDEPKVGRNDPCPCGSGKKYKHCHGQLS) is disordered. 4 residues coordinate Zn(2+): Cys-896, Cys-898, Cys-907, and His-908. The span at 902 to 912 (KKYKHCHGQLS) shows a compositional bias: basic residues.

This sequence belongs to the SecA family. As to quaternary structure, monomer and homodimer. Part of the essential Sec protein translocation apparatus which comprises SecA, SecYEG and auxiliary proteins SecDF-YajC and YidC. The cofactor is Zn(2+).

The protein localises to the cell inner membrane. It localises to the cytoplasm. It catalyses the reaction ATP + H2O + cellular proteinSide 1 = ADP + phosphate + cellular proteinSide 2.. In terms of biological role, part of the Sec protein translocase complex. Interacts with the SecYEG preprotein conducting channel. Has a central role in coupling the hydrolysis of ATP to the transfer of proteins into and across the cell membrane, serving both as a receptor for the preprotein-SecB complex and as an ATP-driven molecular motor driving the stepwise translocation of polypeptide chains across the membrane. This is Protein translocase subunit SecA from Xanthomonas oryzae pv. oryzae (strain MAFF 311018).